The chain runs to 231 residues: MAKLGKRLVGIREKLEPGKLYPVEEALNLLKEVAKVKFEESVDVAVNLGVDPRKSDQVVRGSTVLPNGLGKTVRVGVFTQGVNAEAAKNAGADVVGLEDLAETVKSGQIDFDVIIASPDAMRVVGQLGPILGPRGLMPNPKVGTVTTDVAGAVTKAKAGQVRYRTDKAGIIHCSIGKTSFEVDALKQNLRALVEDLGKLKPASAKGIYLKKLTLSTTMGPGIAVDQASLPV.

It belongs to the universal ribosomal protein uL1 family. As to quaternary structure, part of the 50S ribosomal subunit.

In terms of biological role, binds directly to 23S rRNA. The L1 stalk is quite mobile in the ribosome, and is involved in E site tRNA release. Functionally, protein L1 is also a translational repressor protein, it controls the translation of the L11 operon by binding to its mRNA. In Nitrosococcus oceani (strain ATCC 19707 / BCRC 17464 / JCM 30415 / NCIMB 11848 / C-107), this protein is Large ribosomal subunit protein uL1.